The chain runs to 480 residues: Methylenetetrahydrofolate--tRNA-(uracil-5-)-methyltransferase TrmFO (480 aa).

15 to 20 (GGGLAG) is an FAD binding site.

The protein belongs to the MnmG family. TrmFO subfamily. The cofactor is FAD.

The protein resides in the cytoplasm. The enzyme catalyses uridine(54) in tRNA + (6R)-5,10-methylene-5,6,7,8-tetrahydrofolate + NADH + H(+) = 5-methyluridine(54) in tRNA + (6S)-5,6,7,8-tetrahydrofolate + NAD(+). It carries out the reaction uridine(54) in tRNA + (6R)-5,10-methylene-5,6,7,8-tetrahydrofolate + NADPH + H(+) = 5-methyluridine(54) in tRNA + (6S)-5,6,7,8-tetrahydrofolate + NADP(+). Catalyzes the folate-dependent formation of 5-methyl-uridine at position 54 (M-5-U54) in all tRNAs. The sequence is that of Methylenetetrahydrofolate--tRNA-(uracil-5-)-methyltransferase TrmFO from Sinorhizobium medicae (strain WSM419) (Ensifer medicae).